The chain runs to 860 residues: Alanine--tRNA ligase (860 aa).

Zn(2+)-binding residues include His-553, His-557, Cys-655, and His-659.

This sequence belongs to the class-II aminoacyl-tRNA synthetase family. It depends on Zn(2+) as a cofactor.

The protein localises to the cytoplasm. It catalyses the reaction tRNA(Ala) + L-alanine + ATP = L-alanyl-tRNA(Ala) + AMP + diphosphate. Catalyzes the attachment of alanine to tRNA(Ala) in a two-step reaction: alanine is first activated by ATP to form Ala-AMP and then transferred to the acceptor end of tRNA(Ala). Also edits incorrectly charged Ser-tRNA(Ala) and Gly-tRNA(Ala) via its editing domain. The chain is Alanine--tRNA ligase from Legionella pneumophila (strain Lens).